Consider the following 460-residue polypeptide: Tol-Pal system protein TolB (460 aa).

The signal sequence occupies residues 1–22 (MTIFQKSFILLIIWNFSLFAFS).

The protein belongs to the TolB family. As to quaternary structure, the Tol-Pal system is composed of five core proteins: the inner membrane proteins TolA, TolQ and TolR, the periplasmic protein TolB and the outer membrane protein Pal. They form a network linking the inner and outer membranes and the peptidoglycan layer.

It is found in the periplasm. Functionally, part of the Tol-Pal system, which plays a role in outer membrane invagination during cell division and is important for maintaining outer membrane integrity. TolB occupies a key intermediary position in the Tol-Pal system because it communicates directly with both membrane-embedded components, Pal in the outer membrane and TolA in the inner membrane. The polypeptide is Tol-Pal system protein TolB (Blochmanniella floridana).